Consider the following 123-residue polypeptide: Putative iron-sulfur cluster insertion protein ErpA (123 aa).

The iron-sulfur cluster site is built by cysteine 51, cysteine 115, and cysteine 117.

It belongs to the HesB/IscA family. As to quaternary structure, homodimer. The cofactor is iron-sulfur cluster.

Its function is as follows. Required for insertion of 4Fe-4S clusters. The protein is Putative iron-sulfur cluster insertion protein ErpA of Burkholderia lata (strain ATCC 17760 / DSM 23089 / LMG 22485 / NCIMB 9086 / R18194 / 383).